The chain runs to 1358 residues: DNA-directed RNA polymerase subunit beta (1358 aa).

The protein belongs to the RNA polymerase beta chain family. In terms of assembly, the RNAP catalytic core consists of 2 alpha, 1 beta, 1 beta' and 1 omega subunit. When a sigma factor is associated with the core the holoenzyme is formed, which can initiate transcription.

It carries out the reaction RNA(n) + a ribonucleoside 5'-triphosphate = RNA(n+1) + diphosphate. Functionally, DNA-dependent RNA polymerase catalyzes the transcription of DNA into RNA using the four ribonucleoside triphosphates as substrates. The chain is DNA-directed RNA polymerase subunit beta from Azotobacter vinelandii (strain DJ / ATCC BAA-1303).